The following is a 122-amino-acid chain: Ribosome-binding factor A (122 aa).

The segment covering 95 to 111 has biased composition (basic and acidic residues); that stretch reads PTVERVTRIQRTLREVS. A disordered region spans residues 95–122; the sequence is PTVERVTRIQRTLREVSGEDGDGNGTQE.

The protein belongs to the RbfA family. Monomer. Binds 30S ribosomal subunits, but not 50S ribosomal subunits or 70S ribosomes.

The protein resides in the cytoplasm. Its function is as follows. One of several proteins that assist in the late maturation steps of the functional core of the 30S ribosomal subunit. Associates with free 30S ribosomal subunits (but not with 30S subunits that are part of 70S ribosomes or polysomes). Required for efficient processing of 16S rRNA. May interact with the 5'-terminal helix region of 16S rRNA. The protein is Ribosome-binding factor A of Rubrobacter xylanophilus (strain DSM 9941 / JCM 11954 / NBRC 16129 / PRD-1).